Reading from the N-terminus, the 487-residue chain is Cyclic AMP-dependent transcription factor ATF-2 (487 aa).

Residues 7–31 (FLCTAPGCGQRFTNEDHLAVHKHKH) form a C2H2-type zinc finger. A Phosphothreonine; by PKC/PRKCH modification is found at Thr34. Ser44 is subject to Phosphoserine; by VRK1. A phosphothreonine mark is found at Thr51 and Thr53. Phosphothreonine; by VRK1 is present on Thr55. Residues Ser72 and Ser94 each carry the phosphoserine modification. At Thr98 the chain carries Phosphothreonine. The residue at position 103 (Ser103) is a Phosphoserine; by PKC/PRKCA and PKC/PRKCB. Disordered stretches follow at residues 107–130 (EPSV…TNDE) and 241–355 (PGIP…RQKR). Position 118 is a phosphoserine (Ser118). The span at 264-275 (LTQQHPPVTNGD) shows a compositional bias: polar residues. The essential for its histone acetyltransferase activity stretch occupies residues 278–281 (KGHG). Residues 300-316 (PATSTTETPASPAHTTP) are compositionally biased toward low complexity. Ser310 is modified (phosphoserine). The residue at position 322 (Ser322) is a Phosphoserine; by PKC/PRKCA and PKC/PRKCB. Residues 328–345 (AANEDPDEKRRKFLERNR) show a composition bias toward basic and acidic residues. The region spanning 334-397 (DEKRRKFLER…AQLKQLLLAH (64 aa)) is the bZIP domain. The tract at residues 336–356 (KRRKFLERNRAAASRCRQKRK) is basic motif. At Lys339 the chain carries N6-acetyllysine. Phosphoserine; by PKC/PRKCA and PKC/PRKCB is present on Ser349. The residue at position 356 (Lys356) is an N6-acetyllysine. Positions 362 to 390 (LEKKAEDLSSLNGQLQSEVTLLRNEVAQL) are leucine-zipper. Positions 387–396 (VAQLKQLLLA) match the Nuclear export signal motif. The interval 407–487 (KKSGYHTADK…PSSQAQPSGS (81 aa)) is disordered. Phosphoserine occurs at positions 424 and 428. Residues 425–436 (VPSSPHTEAIQH) show a composition bias toward polar residues. Positions 437–449 (SSVSTSNGVSSTS) are enriched in low complexity. Residues 457-470 (SVLTQMADQSTEPA) show a composition bias toward polar residues. Phosphoserine; by ATM occurs at positions 472 and 480. A compositionally biased stretch (polar residues) spans 478–487 (PSSQAQPSGS).

Belongs to the bZIP family. ATF subfamily. Binds DNA as a dimer and can form a homodimer in the absence of DNA. Can form a heterodimer with JUN. Heterodimerization is essential for its transcriptional activity. Interacts with SMAD3 and SMAD4. Binds through its N-terminal region to UTF1 which acts as a coactivator of ATF2 transcriptional activity. Interacts with the HK1/VDAC1 complex. Interacts with NBN, MRE11, XPO1, KAT5 and CUL3. In terms of processing, phosphorylation of Thr-51 by MAPK14 and MAPK11, and at Thr-53 by MAPK1/ERK2, MAPK3/ERK1, MAPK11, MAPK12 and MAPK14 in response to external stimulus like insulin causes increased transcriptional activity. Phosphorylated by PLK3 following hyperosmotic stress. Also phosphorylated and activated by JNK and CaMK4. ATM-mediated phosphorylation at Ser-472 and Ser-480 stimulates its function in DNA damage response. Phosphorylation at Ser-44, Thr-55 and Ser-103 activates its transcriptional activity. Phosphorylation at Thr-51 or Thr-53 enhances acetylation of histones H2B and H4.

It is found in the nucleus. It localises to the cytoplasm. The protein localises to the mitochondrion outer membrane. In terms of biological role, transcriptional activator which regulates the transcription of various genes, including those involved in anti-apoptosis, cell growth, and DNA damage response. Dependent on its binding partner, binds to CRE (cAMP response element) consensus sequences (5'-TGACGTCA-3') or to AP-1 (activator protein 1) consensus sequences (5'-TGACTCA-3'). In the nucleus, contributes to global transcription and the DNA damage response, in addition to specific transcriptional activities that are related to cell development, proliferation and death. In the cytoplasm, interacts with and perturbs HK1- and VDAC1-containing complexes at the mitochondrial outer membrane, thereby impairing mitochondrial membrane potential, inducing mitochondrial leakage and promoting cell death. The phosphorylated form (mediated by ATM) plays a role in the DNA damage response and is involved in the ionizing radiation (IR)-induced S phase checkpoint control and in the recruitment of the MRN complex into the IR-induced foci (IRIF). Exhibits histone acetyltransferase (HAT) activity which specifically acetylates histones H2B and H4 in vitro. In concert with CUL3 and RBX1, promotes the degradation of KAT5 thereby attenuating its ability to acetylate and activate ATM. Can elicit oncogenic or tumor suppressor activities depending on the tissue or cell type. The protein is Cyclic AMP-dependent transcription factor ATF-2 (Atf2) of Rattus norvegicus (Rat).